Reading from the N-terminus, the 290-residue chain is Inositol monophosphatase 2 (290 aa).

Residues Glu-83, Asp-103, Ile-105, and Asp-106 each coordinate Mg(2+). Position 83 (Glu-83) interacts with substrate. Substrate-binding positions include 105 to 108 (IDGT), 207 to 209 (GSS), Gln-226, and Asp-233. Residue Asp-233 participates in Mg(2+) binding.

The protein belongs to the inositol monophosphatase superfamily. As to quaternary structure, homodimer. Mg(2+) is required as a cofactor.

It is found in the cytoplasm. The catalysed reaction is a myo-inositol phosphate + H2O = myo-inositol + phosphate. It participates in polyol metabolism; myo-inositol biosynthesis; myo-inositol from D-glucose 6-phosphate: step 2/2. Can use myo-inositol monophosphates, scylloinositol 1,4-diphosphate, glucose-1-phosphate, beta-glycerophosphate, and 2'-AMP as substrates. Has been implicated as the pharmacological target for lithium Li(+) action in brain. This is Inositol monophosphatase 2 (Impa2) from Rattus norvegicus (Rat).